The sequence spans 612 residues: Threonine--tRNA ligase (612 aa).

A catalytic region spans residues 218 to 509; the sequence is NHRKLGVELG…LSEHFGGNFP (292 aa). The Zn(2+) site is built by Cys310, His361, and His486.

This sequence belongs to the class-II aminoacyl-tRNA synthetase family. As to quaternary structure, homodimer. Zn(2+) is required as a cofactor.

It localises to the cytoplasm. The enzyme catalyses tRNA(Thr) + L-threonine + ATP = L-threonyl-tRNA(Thr) + AMP + diphosphate + H(+). Catalyzes the attachment of threonine to tRNA(Thr) in a two-step reaction: L-threonine is first activated by ATP to form Thr-AMP and then transferred to the acceptor end of tRNA(Thr). Also edits incorrectly charged L-seryl-tRNA(Thr). The protein is Threonine--tRNA ligase of Helicobacter pylori (strain Shi470).